An 809-amino-acid chain; its full sequence is Phenylalanine--tRNA ligase beta subunit (809 aa).

The tRNA-binding domain maps to 39 to 152 (KDKWPNVYVG…ADALVGMLAS (114 aa)). The B5 domain maps to 404–492 (KERNGIVLSL…RIAGYHTIPC (89 aa)). 4 residues coordinate Mg(2+): Asp470, Asp476, Glu479, and Glu480. In terms of domain architecture, FDX-ACB spans 717-808 (NRFPAVERDL…LNTETGAVLR (92 aa)).

The protein belongs to the phenylalanyl-tRNA synthetase beta subunit family. Type 1 subfamily. As to quaternary structure, tetramer of two alpha and two beta subunits. Mg(2+) serves as cofactor.

It is found in the cytoplasm. It catalyses the reaction tRNA(Phe) + L-phenylalanine + ATP = L-phenylalanyl-tRNA(Phe) + AMP + diphosphate + H(+). The chain is Phenylalanine--tRNA ligase beta subunit from Dehalococcoides mccartyi (strain CBDB1).